The chain runs to 431 residues: Glutamyl-tRNA(Gln) amidotransferase subunit A (431 aa).

Residues K55 and S130 each act as charge relay system in the active site. The active-site Acyl-ester intermediate is S154.

The protein belongs to the amidase family. GatA subfamily. As to quaternary structure, heterotrimer of A, B and C subunits.

It carries out the reaction L-glutamyl-tRNA(Gln) + L-glutamine + ATP + H2O = L-glutaminyl-tRNA(Gln) + L-glutamate + ADP + phosphate + H(+). Its function is as follows. Allows the formation of correctly charged Gln-tRNA(Gln) through the transamidation of misacylated Glu-tRNA(Gln) in organisms which lack glutaminyl-tRNA synthetase. The reaction takes place in the presence of glutamine and ATP through an activated gamma-phospho-Glu-tRNA(Gln). This Methanococcus maripaludis (strain C7 / ATCC BAA-1331) protein is Glutamyl-tRNA(Gln) amidotransferase subunit A.